Here is a 78-residue protein sequence, read N- to C-terminus: Keratin-associated protein 6-5 (78 aa).

The tract at residues 3–76 (GYYGNYYGGR…GSGYGSGFGY (74 aa)) is 25 X 2 AA repeats of G-[YCGS].

This sequence belongs to the KRTAP type 6 family. Interacts with hair keratins. Strong expression in narrowly defined pattern restricted to the lower and middle cortical regions of the hair shaft in both developing and cycling hair. During hair follicle regression (catagen), expression levels decrease until expression is no longer detectable in follicles at resting stage (telogen).

In the hair cortex, hair keratin intermediate filaments are embedded in an interfilamentous matrix, consisting of hair keratin-associated proteins (KRTAP), which are essential for the formation of a rigid and resistant hair shaft through their extensive disulfide bond cross-linking with abundant cysteine residues of hair keratins. The matrix proteins include the high-sulfur and high-glycine-tyrosine keratins. The chain is Keratin-associated protein 6-5 (Krtap6-5) from Mus musculus (Mouse).